Here is a 511-residue protein sequence, read N- to C-terminus: AMP phosphorylase (511 aa).

Residues G168, 194–199 (SRAITS), and T203 contribute to the AMP site. D256 functions as the Proton donor in the catalytic mechanism. AMP is bound by residues S262 and K286.

This sequence belongs to the thymidine/pyrimidine-nucleoside phosphorylase family. Type 2 subfamily.

It carries out the reaction AMP + phosphate = alpha-D-ribose 1,5-bisphosphate + adenine. The catalysed reaction is CMP + phosphate = cytosine + alpha-D-ribose 1,5-bisphosphate. It catalyses the reaction UMP + phosphate = alpha-D-ribose 1,5-bisphosphate + uracil. In terms of biological role, catalyzes the conversion of AMP and phosphate to adenine and ribose 1,5-bisphosphate (R15P). Exhibits phosphorylase activity toward CMP and UMP in addition to AMP. Functions in an archaeal AMP degradation pathway, together with R15P isomerase and RubisCO. The polypeptide is AMP phosphorylase (Thermofilum pendens (strain DSM 2475 / Hrk 5)).